Reading from the N-terminus, the 136-residue chain is Putative pre-16S rRNA nuclease (136 aa).

It belongs to the YqgF nuclease family.

It localises to the cytoplasm. Functionally, could be a nuclease involved in processing of the 5'-end of pre-16S rRNA. The polypeptide is Putative pre-16S rRNA nuclease (Francisella tularensis subsp. novicida (strain U112)).